We begin with the raw amino-acid sequence, 366 residues long: Aminomethyltransferase (366 aa).

The protein belongs to the GcvT family. The glycine cleavage system is composed of four proteins: P, T, L and H.

The enzyme catalyses N(6)-[(R)-S(8)-aminomethyldihydrolipoyl]-L-lysyl-[protein] + (6S)-5,6,7,8-tetrahydrofolate = N(6)-[(R)-dihydrolipoyl]-L-lysyl-[protein] + (6R)-5,10-methylene-5,6,7,8-tetrahydrofolate + NH4(+). Functionally, the glycine cleavage system catalyzes the degradation of glycine. The sequence is that of Aminomethyltransferase from Bacillus cereus (strain ATCC 10987 / NRS 248).